The chain runs to 115 residues: Large ribosomal subunit protein bL19 (115 aa).

This sequence belongs to the bacterial ribosomal protein bL19 family.

Its function is as follows. This protein is located at the 30S-50S ribosomal subunit interface and may play a role in the structure and function of the aminoacyl-tRNA binding site. The chain is Large ribosomal subunit protein bL19 from Enterobacter sp. (strain 638).